A 1138-amino-acid polypeptide reads, in one-letter code: Condensin-2 complex subunit G2 (1138 aa).

The residue at position 30 (Ser-30) is a Phosphoserine. The stretch at 459-497 (LLPTLRYSLHDNSEKVRVAFVDLLLKIKAVRAAKFWKIC) is one HEAT repeat. Residue Thr-1114 is modified to Phosphothreonine.

In terms of assembly, component of the condensin-2 complex, which contains the SMC2 and SMC4 heterodimer, and 3 non SMC subunits that probably regulate the complex: NCAPH2, NCAPD3 and NCAPG2. As to expression, expressed in spleen, lung and testis as well as in hematopoietic cell lines.

Its subcellular location is the nucleus. Regulatory subunit of the condensin-2 complex, a complex which establishes mitotic chromosome architecture and is involved in physical rigidity of the chromatid axis. Is required for early embryonic development and is essential for viability and expansion of the inner cell mass (ICM) of the implanting blastocyst. The chain is Condensin-2 complex subunit G2 (Ncapg2) from Mus musculus (Mouse).